Here is a 251-residue protein sequence, read N- to C-terminus: N-acetylmuramoyl-L-alanine amidase CwlA (251 aa).

The first 37 residues, 1-37, serve as a signal peptide directing secretion; sequence MEIKQMLVPVSRYSVLCPYEMNPTEITFHNTYNDAPA. The N-acetylmuramoyl-L-alanine amidase domain occupies 38-140; it reads INERNNVANN…QERNGKYCPH (103 aa).

This sequence belongs to the N-acetylmuramoyl-L-alanine amidase 2 family.

It localises to the secreted. The enzyme catalyses Hydrolyzes the link between N-acetylmuramoyl residues and L-amino acid residues in certain cell-wall glycopeptides.. Functionally, autolysins are involved in some important biological processes such as cell separation, cell-wall turnover, competence for genetic transformation, formation of the flagella and sporulation. The chain is N-acetylmuramoyl-L-alanine amidase CwlA (cwlA) from Bacillus sp.